Reading from the N-terminus, the 382-residue chain is Small ribosomal subunit protein bS1 homolog (382 aa).

S1 motif domains lie at G16 to R84, K102 to R167, G188 to K256, and G273 to R342. Phosphoserine is present on S243.

The protein belongs to the bacterial ribosomal protein bS1 family.

Its function is as follows. Plays a role in sporulation. Cannot be expressed in wild-type E.coli, does not complement an E.coli rpsA deletion. This chain is Small ribosomal subunit protein bS1 homolog, found in Bacillus subtilis (strain 168).